Reading from the N-terminus, the 793-residue chain is Alanine--tRNA ligase, mitochondrial (793 aa).

Residues arginine 88, tryptophan 187, and 224–226 (IWN) each bind ATP. 2 residues coordinate L-alanine: asparagine 226 and aspartate 249. Glycine 253 provides a ligand contact to ATP. Residues histidine 594, histidine 598, cysteine 706, and histidine 710 each coordinate Zn(2+).

It belongs to the class-II aminoacyl-tRNA synthetase family. In terms of assembly, monomer. The cofactor is Zn(2+).

The protein resides in the mitochondrion. It catalyses the reaction tRNA(Ala) + L-alanine + ATP = L-alanyl-tRNA(Ala) + AMP + diphosphate. Functionally, catalyzes the attachment of alanine to tRNA(Ala) in a two-step reaction: alanine is first activated by ATP to form Ala-AMP and then transferred to the acceptor end of tRNA(Ala). Also edits incorrectly charged tRNA(Ala) via its editing domain. The sequence is that of Alanine--tRNA ligase, mitochondrial from Caenorhabditis elegans.